A 176-amino-acid polypeptide reads, in one-letter code: MIDDDGYRPNVGIVICNRQGQVMWARRFGQHSWQFPQGGINPGESAEQAMYRELFEEVGLSRKDVRILASTRNWLRYKLPKRLVRWDTKPVCIGQKQKWFLLQLVSGDAEINMQTSSTPEFDGWRWVSYWYPVRQVVSFKRDVYRRVMKEFASVVMSLQENTPKPQNTSAYRRKRG.

Residues 6–149 (GYRPNVGIVI…KRDVYRRVMK (144 aa)) form the Nudix hydrolase domain. The Nudix box motif lies at 38–59 (GGINPGESAEQAMYRELFEEVG).

This sequence belongs to the Nudix hydrolase family. RppH subfamily. A divalent metal cation serves as cofactor.

In terms of biological role, accelerates the degradation of transcripts by removing pyrophosphate from the 5'-end of triphosphorylated RNA, leading to a more labile monophosphorylated state that can stimulate subsequent ribonuclease cleavage. This is RNA pyrophosphohydrolase from Shigella boydii serotype 18 (strain CDC 3083-94 / BS512).